The primary structure comprises 223 residues: Kinetochore protein Spc25 (223 aa).

A coiled-coil region spans residues 51–119 (RHQRKVGKLQ…NEIMERIQTL (69 aa)).

It belongs to the SPC25 family. As to quaternary structure, component of the Ndc80 complex, which is composed of Ndc80, Nuf2 and Spc25.

The protein localises to the nucleus. It localises to the chromosome. Its subcellular location is the centromere. It is found in the kinetochore. Functionally, acts as a component of the essential kinetochore-associated Ndc80 complex, which is required for chromosome segregation and spindle checkpoint activity during meiosis and mitosis. Required for kinetochore integrity and the organization of stable microtubule binding sites in the outer plate of the kinetochore. Participates in SAC signaling that responds specifically to disruptions in spindle microtubule dynamics. The NDC80 complex synergistically enhances the affinity of the SKA1 complex for microtubules and may allow the NDC80 complex to track depolymerizing microtubules. The sequence is that of Kinetochore protein Spc25 from Drosophila teissieri (Fruit fly).